Reading from the N-terminus, the 96-residue chain is Small ribosomal subunit protein bS20 (96 aa).

Belongs to the bacterial ribosomal protein bS20 family.

In terms of biological role, binds directly to 16S ribosomal RNA. This chain is Small ribosomal subunit protein bS20, found in Anaplasma marginale (strain St. Maries).